The chain runs to 637 residues: DNA damage-binding protein CMR1 (637 aa).

Disordered stretches follow at residues M1 to A91 and L144 to R168. Basic and acidic residues-rich tracts occupy residues E8–K23 and A74–A91. WD repeat units follow at residues V185–N226, H255–I295, A297–D321, V361–K401, and K431–E470. Disordered stretches follow at residues S482 to L508 and K525 to I549. 2 WD repeats span residues G556 to L598 and N602 to P637.

It belongs to the WD repeat DDB2/WDR76 family.

In terms of biological role, DNA-binding protein that binds to both single- and double-stranded DNA. Binds preferentially to UV-damaged DNA. May be involved in DNA-metabolic processes. This chain is DNA damage-binding protein CMR1, found in Mycosarcoma maydis (Corn smut fungus).